A 544-amino-acid polypeptide reads, in one-letter code: Probable protein kinase UbiB (544 aa).

Residues 1-21 (MIFGELRRLYLIIGVMLSYGL) form a helical membrane-spanning segment. The Protein kinase domain maps to 123–500 (DFQQEPLASA…HVRQSQSRFL (378 aa)). ATP contacts are provided by residues 129–137 (LASASIAQV) and Lys151. Catalysis depends on Asp286, which acts as the Proton acceptor. A run of 2 helical transmembrane segments spans residues 499–519 (FLFG…TQGA) and 520–540 (DEGS…IIGW).

Belongs to the ABC1 family. UbiB subfamily.

Its subcellular location is the cell inner membrane. Its pathway is cofactor biosynthesis; ubiquinone biosynthesis [regulation]. Functionally, is probably a protein kinase regulator of UbiI activity which is involved in aerobic coenzyme Q (ubiquinone) biosynthesis. This chain is Probable protein kinase UbiB, found in Sodalis glossinidius (strain morsitans).